The chain runs to 120 residues: C-C motif chemokine 2 (120 aa).

A signal peptide spans 1 to 23 (MQRSSVLLCLLVIEATFCSLLMA). At Q24 the chain carries Pyrrolidone carboxylic acid. 2 cysteine pairs are disulfide-bonded: C33/C57 and C34/C73. The interval 91 to 120 (RTQQKQNSTAPQTSKPLNIRFTTQDPKNRS) is disordered. The segment covering 93-120 (QQKQNSTAPQTSKPLNIRFTTQDPKNRS) has biased composition (polar residues). A glycan (N-linked (GlcNAc...) asparagine) is linked at N97.

It belongs to the intercrine beta (chemokine CC) family. As to quaternary structure, monomer or homodimer; in equilibrium. Is tethered on endothelial cells by glycosaminoglycan (GAG) side chains of proteoglycans. Interacts with TNFAIP6 (via Link domain). In terms of processing, processing at the N-terminus can regulate receptor and target cell selectivity. Deletion of the N-terminal residue converts it from an activator of basophil to an eosinophil chemoattractant. N-Glycosylated.

It localises to the secreted. Its function is as follows. Acts as a ligand for C-C chemokine receptor CCR2. Signals through binding and activation of CCR2 and induces a strong chemotactic response and mobilization of intracellular calcium ions. Exhibits a chemotactic activity for monocytes and basophils but not neutrophils or eosinophils. Plays an important role in mediating peripheral nerve injury-induced neuropathic pain. Increases NMDA-mediated synaptic transmission in both dopamine D1 and D2 receptor-containing neurons, which may be caused by MAPK/ERK-dependent phosphorylation of GRIN2B/NMDAR2B. The chain is C-C motif chemokine 2 (CCL2) from Cavia porcellus (Guinea pig).